The chain runs to 450 residues: Chromosomal replication initiator protein DnaA (450 aa).

Residues 1–77 (MTENEQIFWN…EVYNAQIAVD (77 aa)) are domain I, interacts with DnaA modulators. The domain II stretch occupies residues 77 to 109 (DYVYEDDLMIEQQHQGQQGYTEQAFQQLPAVQS). The domain III, AAA+ region stretch occupies residues 110–328 (DLNPKYSFDN…GALKDISLVA (219 aa)). Residues Gly-154, Gly-156, Lys-157, and Thr-158 each coordinate ATP. Positions 329–450 (NFKQIDTITV…EIETIKNKIK (122 aa)) are domain IV, binds dsDNA.

The protein belongs to the DnaA family. As to quaternary structure, oligomerizes as a right-handed, spiral filament on DNA at oriC.

It is found in the cytoplasm. Plays an essential role in the initiation and regulation of chromosomal replication. ATP-DnaA binds to the origin of replication (oriC) to initiate formation of the DNA replication initiation complex once per cell cycle. Binds the DnaA box (a 9 base pair repeat at the origin) and separates the double-stranded (ds)DNA. Forms a right-handed helical filament on oriC DNA; dsDNA binds to the exterior of the filament while single-stranded (ss)DNA is stabiized in the filament's interior. The ATP-DnaA-oriC complex binds and stabilizes one strand of the AT-rich DNA unwinding element (DUE), permitting loading of DNA polymerase. After initiation quickly degrades to an ADP-DnaA complex that is not apt for DNA replication. Binds acidic phospholipids. This is Chromosomal replication initiator protein DnaA from Streptococcus equi subsp. equi (strain 4047).